Here is a 368-residue protein sequence, read N- to C-terminus: Zinc finger protein 24 (368 aa).

Lys-22 is covalently cross-linked (Glycyl lysine isopeptide (Lys-Gly) (interchain with G-Cter in SUMO2)). Residue Lys-27 forms a Glycyl lysine isopeptide (Lys-Gly) (interchain with G-Cter in SUMO1); alternate linkage. A Glycyl lysine isopeptide (Lys-Gly) (interchain with G-Cter in SUMO2); alternate cross-link involves residue Lys-27. An SCAN box domain is found at 52 to 134 (RQRFRQFGYQ…TVLEDLESEL (83 aa)). A phosphoserine mark is found at Ser-132 and Ser-142. Glycyl lysine isopeptide (Lys-Gly) (interchain with G-Cter in SUMO2) cross-links involve residues Lys-147, Lys-177, and Lys-236. Residues 251 to 273 (HICDECGKHFSQGSALILHQRIH) form a C2H2-type 1 zinc finger. Residues 251–301 (HICDECGKHFSQGSALILHQRIHSGEKPYGCVECGKAFSRSSILVQHQRVH) are necessary and sufficient for nuclear localization. Position 274 is a phosphoserine (Ser-274). Residues Lys-277 and Lys-286 each participate in a glycyl lysine isopeptide (Lys-Gly) (interchain with G-Cter in SUMO2) cross-link. C2H2-type zinc fingers lie at residues 279-301 (YGCV…QRVH), 307-329 (YKCL…QRIH), and 335-357 (YECV…XXXH). Ser-292 carries the phosphoserine modification. A Phosphotyrosine modification is found at Tyr-335. Residues Lys-361 and Lys-367 each participate in a glycyl lysine isopeptide (Lys-Gly) (interchain with G-Cter in SUMO2) cross-link.

Belongs to the krueppel C2H2-type zinc-finger protein family. In terms of processing, sumoylated.

The protein resides in the nucleus. Functionally, transcription factor required for myelination of differentiated oligodendrocytes. Required for the conversion of oligodendrocytes from the premyelinating to the myelinating state. In the developing central nervous system (CNS), involved in the maintenance in the progenitor stage by promoting the cell cycle. Specifically binds to the 5'-TCAT-3' DNA sequence. Has transcription repressor activity in vitro. The polypeptide is Zinc finger protein 24 (ZNF24) (Pan paniscus (Pygmy chimpanzee)).